The primary structure comprises 859 residues: Envelope glycoprotein (859 aa).

Positions methionine 1 to phenylalanine 6 are excised as a propeptide. Over tyrosine 7–tryptophan 614 the chain is Extracellular. N-linked (GlcNAc...) asparagine; by host glycans are attached at residues asparagine 40, asparagine 112, asparagine 141, asparagine 148, asparagine 184, asparagine 201, asparagine 214, asparagine 233, asparagine 244, asparagine 282, asparagine 313, asparagine 340, asparagine 346, asparagine 368, asparagine 399, asparagine 406, asparagine 411, and asparagine 422. Residues phenylalanine 446–threonine 466 are fusion peptide. 2 N-linked (GlcNAc...) asparagine; by host glycosylation sites follow: asparagine 483 and asparagine 490. Positions leucine 498 to threonine 513 are immunosuppression. 2 N-linked (GlcNAc...) asparagine; by host glycosylation sites follow: asparagine 550 and asparagine 557. Coiled-coil stretches lie at residues isoleucine 576 to lysine 624 and lysine 663 to glutamine 699. A helical transmembrane segment spans residues isoleucine 615 to leucine 635. Residues leucine 636–valine 859 lie on the Cytoplasmic side of the membrane.

In terms of assembly, the mature envelope protein (Env) consists of a trimer of SU-TM heterodimers attached by noncovalent interactions or by a labile interchain disulfide bond. Specific enzymatic cleavages in vivo yield mature proteins. Envelope glycoproteins are synthesized as an inactive precursor that is N-glycosylated and processed likely by host cell furin or by a furin-like protease in the Golgi to yield the mature SU and TM proteins. The cleavage site between SU and TM requires the minimal sequence [KR]-X-[KR]-R.

It localises to the virion membrane. The protein resides in the host cell membrane. Its function is as follows. The surface protein (SU) attaches the virus to the host cell by binding to its receptor. This interaction triggers the refolding of the transmembrane protein (TM) and is thought to activate its fusogenic potential by unmasking its fusion peptide. Fusion occurs at the host cell plasma membrane. The transmembrane protein (TM) acts as a class I viral fusion protein. Under the current model, the protein has at least 3 conformational states: pre-fusion native state, pre-hairpin intermediate state, and post-fusion hairpin state. During viral and target cell membrane fusion, the coiled coil regions (heptad repeats) assume a trimer-of-hairpins structure, positioning the fusion peptide in close proximity to the C-terminal region of the ectodomain. The formation of this structure appears to drive apposition and subsequent fusion of viral and target cell membranes. Membranes fusion leads to delivery of the nucleocapsid into the cytoplasm. The protein is Envelope glycoprotein (env) of Equus asinus (Donkey).